A 220-amino-acid polypeptide reads, in one-letter code: Ribosomal RNA small subunit methyltransferase G (220 aa).

Residues G82, L87, 105–107, 133–134, and R147 contribute to the S-adenosyl-L-methionine site; these read DST and VE.

Belongs to the methyltransferase superfamily. RNA methyltransferase RsmG family.

The protein resides in the cytoplasm. In terms of biological role, specifically methylates the N7 position of a guanine in 16S rRNA. The polypeptide is Ribosomal RNA small subunit methyltransferase G (Chlorobium limicola (strain DSM 245 / NBRC 103803 / 6330)).